The sequence spans 66 residues: Stress-induced protein KIN1 (66 aa).

The segment covering 1-13 (MSETNKNAFQAGQ) has biased composition (polar residues). The interval 1 to 52 (MSETNKNAFQAGQTAGKAEEKSNVLLDKAKDAAAGAGAGAQQAGKSVSDAAA) is disordered. The span at 17–31 (KAEEKSNVLLDKAKD) shows a compositional bias: basic and acidic residues. 2 repeats span residues 31-35 (DAAAG) and 49-53 (DAAAG). The segment covering 32–45 (AAAGAGAGAQQAGK) has biased composition (low complexity).

The chain is Stress-induced protein KIN1 (KIN1) from Arabidopsis thaliana (Mouse-ear cress).